Reading from the N-terminus, the 2752-residue chain is Piezo-type mechanosensitive ion channel component 2 (2752 aa).

The Cytoplasmic segment spans residues 1 to 12 (MASEVVCGLIFR). The chain crosses the membrane as a helical span at residues 13 to 24 (LLLPICLAVACA). Over 25-30 (FRYNGL) the chain is Extracellular. Residues 31–43 (SFVYLIYLLLIPL) form a helical membrane-spanning segment. The Cytoplasmic segment spans residues 44-50 (FSEPTKT). The helical transmembrane segment at 51 to 76 (TMQGHTGRLLKSLCFISLSFLLLHII) threads the bilayer. At 77-122 (FHITLVSLEAQHRIAPGYNCSTWEKTFRQIGFESLKGADAGNGIRV) the chain is on the extracellular side. N-linked (GlcNAc...) asparagine glycosylation occurs at Asn95. Residues 123–141 (FVPDIGMFIASLTIWLLCR) traverse the membrane as a helical segment. Residues 142–221 (NIVQKPVTDE…KEFIGNMITT (80 aa)) are Cytoplasmic-facing. A helical membrane pass occupies residues 222-237 (AGKVVVTILLGSSGMM). Residues 238 to 240 (LPS) lie on the Extracellular side of the membrane. A helical transmembrane segment spans residues 241-258 (LTSSVYFFVFLGLCTWWS). Residues 259 to 264 (WCRTFD) are Cytoplasmic-facing. A helical transmembrane segment spans residues 265-287 (PLLFSCLCVLLAIFTAGHLIGLY). At 288-335 (LYQFQFFQEAVPPNDYYARLFGIKSVIQTDCSSTWKIIVNPDLSWYHH) the chain is on the extracellular side. Residues 336-355 (ANPILLLVMYYTLATLIRIW) form a helical membrane-spanning segment. The Cytoplasmic segment spans residues 356-492 (LQEPLVQDEG…SIKVHAMVSV (137 aa)). The disordered stretch occupies residues 446 to 478 (STPQYRWEPSDESSEKREEEEEEKEEFEEERSR). Positions 463–474 (EEEEEEKEEFEE) are enriched in acidic residues. The helical transmembrane segment at 493–514 (FQFIMKQSYICALIAMMAWSIT) threads the bilayer. Topologically, residues 515–519 (YHSWL) are extracellular. A helical membrane pass occupies residues 520–531 (TFVLLIWSCTLW). Residues 532–535 (MIRN) lie on the Cytoplasmic side of the membrane. A helical membrane pass occupies residues 536–562 (RRKYAMISSPFMVVYGNLLLILQYIWS). At 563–583 (FELPEIKKVPGFLEKKEPGEL) the chain is on the extracellular side. A helical transmembrane segment spans residues 584–614 (ASKILFTITFWLLLRQHLTEQKALQEKEALL). The Cytoplasmic portion of the chain corresponds to 615–685 (SEVKIGSQEN…GNLVVAMFIK (71 aa)). The segment covering 623–632 (ENEEKDEELQ) has biased composition (acidic residues). The segment at 623–664 (ENEEKDEELQDIQVEGEPKEEEEEEAKEEKQERKKVEQEEAE) is disordered. The segment covering 649–660 (KEEKQERKKVEQ) has biased composition (basic and acidic residues). A helical transmembrane segment spans residues 686–699 (YWIYVCGGMFFFVS). Topologically, residues 700 to 705 (FEGKIV) are extracellular. A helical membrane pass occupies residues 706–724 (MYKIIYMVLFLFCVALYQV). The Cytoplasmic portion of the chain corresponds to 725 to 733 (HYEWWRKIL). Residues 734–753 (KYFWMSVVIYTMLVLIFIYT) form a helical membrane-spanning segment. The Extracellular segment spans residues 754–785 (YQFENFPGLWQNMTGLKKEKLEDLGLKQFTVA). A helical transmembrane segment spans residues 786–807 (ELFTRIFIPTSFLLVCILHLHY). The Cytoplasmic segment spans residues 808 to 940 (FHDRFLELTD…QVFMWWILEL (133 aa)). Phosphoserine is present on Ser838. Residues 862–883 (PGEEKLEGYSEKAQKGDLGKDS) are compositionally biased toward basic and acidic residues. Residues 862–902 (PGEEKLEGYSEKAQKGDLGKDSEESEEDGEEEEESEEEEET) are disordered. The segment covering 884 to 902 (EESEEDGEEEEESEEEEET) has biased composition (acidic residues). The helical transmembrane segment at 941-956 (HIIKIVSSYIIWVSVK) threads the bilayer. Residues 957-962 (EVSLFN) are Extracellular-facing. A helical membrane pass occupies residues 963-972 (YVFLISWAFA). Over 973-980 (LPYAKLRR) the chain is Cytoplasmic. Residues 981–1001 (LASSVCTVWTCVIIVCKMLYQ) traverse the membrane as a helical segment. Residues 1002–1057 (LQTIKPENFSVNCSLPNENQTNIPFNELNKSLLYSAPIDPTEWVGLRKSSPLLVYL) lie on the Extracellular side of the membrane. N-linked (GlcNAc...) asparagine glycosylation is present at Asn1013. Cys1014 and Cys1192 are oxidised to a cystine. Residues 1058–1082 (RNNLLMLAILAFEVTIYRHQEYYRG) form a helical membrane-spanning segment. The Cytoplasmic segment spans residues 1083-1123 (RNNLTAPVSRTIFHDITRLHLDDGLINCAKYFINYFFYKFG). Residues 1124 to 1138 (LETCFLMSVNVIGQR) traverse the membrane as a helical segment. Residues 1139–1140 (MD) lie on the Extracellular side of the membrane. Residues 1141–1154 (FYAMIHACWLIAVL) traverse the membrane as a helical segment. Topologically, residues 1155–1165 (YRRRRKAIAEI) are cytoplasmic. Residues 1166-1185 (WPKYCCFLACIITFQYFICI) traverse the membrane as a helical segment. Residues 1186–1222 (GIPPAPCRDYPWRFKGASFNDNIIKWLYFPDFIVRPN) are Extracellular-facing. A helical membrane pass occupies residues 1223–1243 (PVFLVYDFMLLLCASLQRQIF). At 1244–1297 (EDENKAAVRIMAGDNVEICMNLDAASFSQHNPVPDFIHCRSYLDMSKVIIFSYL) the chain is on the cytoplasmic side. The chain crosses the membrane as a helical span at residues 1298–1310 (FWFVLTIIFITGT). Residues 1311–1316 (TRISIF) are Extracellular-facing. Residues 1317–1329 (CMGYLVACFYFLL) form a helical membrane-spanning segment. Residues 1330–1338 (FGGDLLLKP) lie on the Cytoplasmic side of the membrane. The helical transmembrane segment at 1339-1364 (IKSILRYWDWLIAYNVFVITMKNILS) threads the bilayer. Residues 1365 to 1413 (IGACGYIGTLVHNSCWLIQAFSLACTVKGYQMPAANSPCTLPSGEAGII) are Extracellular-facing. The chain crosses the membrane as a helical span at residues 1414-1430 (WDSICFAFLLLQRRVFM). Residues 1431-1921 (SYYFLHVVAD…YAMYNTLVAR (491 aa)) lie on the Cytoplasmic side of the membrane. Positions 1458–1529 (TIVKAVKARI…EREADKQKAK (72 aa)) form a coiled coil. Disordered stretches follow at residues 1488–1534 (QQKY…KKKQ), 1593–1636 (ALRQ…KKSD), and 1844–1868 (SQDD…KLGS). Over residues 1594–1615 (LRQRHKEKKRSAREERKRRRKG) the composition is skewed to basic residues. Residues 1922 to 1936 (SEMVCYFVIILNHMV) form a helical membrane-spanning segment. The Extracellular segment spans residues 1937–1943 (SASMITL). Residues 1944–1955 (LLPILIFLWAML) form a helical membrane-spanning segment. Topologically, residues 1956 to 1961 (SVPRPS) are cytoplasmic. Residues 1962–1983 (RRFWMMAIVYTEVAIVVKYFFQ) traverse the membrane as a helical segment. Residues 1984–2016 (FGFFPWNKNVEVNKDKPYHPPNIIGVEKKEGYV) lie on the Extracellular side of the membrane. The chain crosses the membrane as a helical span at residues 2017–2035 (LYDLIQLLALFFHRSILKC). Residues 2036–2189 (HGLWDEDDMT…HPEYSAVTDV (154 aa)) lie on the Cytoplasmic side of the membrane. 2 disordered regions span residues 2047–2069 (SGMA…DSSD) and 2090–2135 (QQTA…SVLS). Residues 2100–2127 (GSSSEPSQRSSFSSNRSQRGSTSTRNSS) are compositionally biased toward low complexity. Residues 2190 to 2209 (YVLMFLADTVDFIIIVFGFW) form a helical membrane-spanning segment. Residues 2210 to 2231 (AFGKHSAAADITSSLSEDQVPG) lie on the Extracellular side of the membrane. The chain crosses the membrane as a helical span at residues 2232 to 2252 (PFLVMVLIQFGTMVVDRALYL). Topologically, residues 2253-2256 (RKTV) are cytoplasmic. The chain crosses the membrane as a helical span at residues 2257 to 2280 (LGKVIFQVILVFGIHFWMFFILPG). Residues 2281-2289 (VTERKFSQN) lie on the Extracellular side of the membrane. The helical transmembrane segment at 2290 to 2312 (LVAQLWYFVKCVYFGLSAYQIRC) threads the bilayer. Residues 2313–2397 (GYPTRVLGNF…YPQPRGQKKK (85 aa)) lie on the Cytoplasmic side of the membrane. A helical membrane pass occupies residues 2398-2421 (KVVKYGMGGMIIVLLICIVWFPLL). The Extracellular portion of the chain corresponds to 2422–2669 (FMSLIKSVAG…PSLGFLAGYG (248 aa)). A helical membrane pass occupies residues 2670–2690 (IMGLYASVVLVIGKFVREFFS). Residues 2691–2752 (GISHSIMFEE…MIKWTREKTN (62 aa)) are Cytoplasmic-facing.

It belongs to the PIEZO (TC 1.A.75) family. As to quaternary structure, homotrimer; the homotrimer forms a propeller-shaped Piezo channel with a cation-ion conducting pore. Heterotrimeric interaction may occur between PIEZO1 and PIEZO2. Interacts with STOML3. Interacts with TMC7; the interaction inhibits PIEZO2-conducted mechanically activated currents. Interacts with TMC1; the interaction may be part of the MET complex. Interacts with MDFIC (via C-terminus); the interaction prolongs Piezo channel inactivation. Interacts with MDFI (via C-terminus); the interaction prolongs Piezo channel inactivation.

The protein resides in the cell membrane. It carries out the reaction Ca(2+)(in) = Ca(2+)(out). Regulated by auxillary subunits MDFIC and MDFI. Channel activity is inhibited by TMEM120A. Phosphatidic acid and lysophosphatidic acid inhibit PIEZO2 channel activity. In terms of biological role, pore-forming subunit of the mechanosensitive non-specific cation Piezo channel required for rapidly adapting mechanically activated (MA) currents and has a key role in sensing touch and tactile pain. Piezo channels are homotrimeric three-blade propeller-shaped structures that utilize a cap-motion and plug-and-latch mechanism to gate their ion-conducting pathways. Expressed in sensory neurons, is essential for diverse physiological processes, including respiratory control, systemic metabolism, urinary function, and proprioception. Mediates airway stretch sensing, enabling efficient respiration at birth and maintaining normal breathing in adults. It regulates brown and beige adipose tissue morphology and function, preventing systemic hypermetabolism. In the lower urinary tract, acts as a sensor in both the bladder urothelium and innervating sensory neurons being required for bladder-stretch sensing and urethral micturition reflexes, ensuring proper urinary function. Additionally, PIEZO2 serves as the principal mechanotransducer in proprioceptors, facilitating proprioception and coordinated body movements. In inner ear hair cells, PIEZO1/2 subunits may constitute part of the mechanotransducer (MET) non-selective cation channel complex where they may act as pore-forming ion-conducting component in the complex. Required for Merkel-cell mechanotransduction. Plays a major role in light-touch mechanosensation. This is Piezo-type mechanosensitive ion channel component 2 from Homo sapiens (Human).